A 620-amino-acid chain; its full sequence is Toxin coregulated pilus biosynthesis protein I (620 aa).

The region spanning 344–580 is the Methyl-accepting transducer domain; sequence TMNDLSIKQT…DVAKQMEDIR (237 aa).

It belongs to the methyl-accepting chemotaxis (MCP) protein family.

It is found in the cell inner membrane. May function as an environmental regulator of TCP biogenesis. Negatively regulates the synthesis of the major pilin subunit of TCP (TcpA). This Vibrio cholerae serotype O1 (strain ATCC 39315 / El Tor Inaba N16961) protein is Toxin coregulated pilus biosynthesis protein I (tcpI).